Consider the following 525-residue polypeptide: Protein kinase PINOID 2 (525 aa).

Residues M1 to R27 are disordered. The Protein kinase domain maps to F87–F465. Residues L93–V101 and K118 contribute to the ATP site. D214 (proton acceptor) is an active-site residue. The region spanning E466–F525 is the AGC-kinase C-terminal domain.

It belongs to the protein kinase superfamily. Ser/Thr protein kinase family.

It catalyses the reaction L-seryl-[protein] + ATP = O-phospho-L-seryl-[protein] + ADP + H(+). It carries out the reaction L-threonyl-[protein] + ATP = O-phospho-L-threonyl-[protein] + ADP + H(+). Functionally, serine/threonine-protein kinase involved in the regulation of auxin signaling. Plays a minor role in the regulation of cellular auxin efflux and cotyledon organogenesis. In Arabidopsis thaliana (Mouse-ear cress), this protein is Protein kinase PINOID 2 (PID2).